The following is a 369-amino-acid chain: MESIHIQTTSKKYDVYVGKHVLSSLTEVVQRMKPAVSNVMIISDESVATLHLQKVKEALQIKQDVFSFVIPSGEKEKSFENFYAVHTAALENKLDRNSLIIALGGGMIGDLAGFVAATFMRGIRFVQVPTTLLAHDSAVGGKVAINHPLGKNMIGAFHQPEAVLYHTPFLDSLPEKEWRSGFAEVIKHALIGDVELYHWLKNNVTTLADLRDDKLVYVLKRAIPVKAKIVAQDETEKGVRAHLNFGHTLGHALEKESGYGNITHGDGVAIGMLFAIFLSEQMYKIDLRYKELKQWFLQYGYPSIPRHLKVDRLVNVMKQDKKANAGTIRMVLMQEYGGVHVVSISDKTVHTSLEAFQKDMVLGEEMNFE.

NAD(+) contacts are provided by residues S72 to K77, T130 to T131, K142, and K151. Zn(2+)-binding residues include E184, H247, and H264.

It belongs to the sugar phosphate cyclases superfamily. Dehydroquinate synthase family. It depends on Co(2+) as a cofactor. The cofactor is Zn(2+). Requires NAD(+) as cofactor.

Its subcellular location is the cytoplasm. It carries out the reaction 7-phospho-2-dehydro-3-deoxy-D-arabino-heptonate = 3-dehydroquinate + phosphate. The protein operates within metabolic intermediate biosynthesis; chorismate biosynthesis; chorismate from D-erythrose 4-phosphate and phosphoenolpyruvate: step 2/7. Functionally, catalyzes the conversion of 3-deoxy-D-arabino-heptulosonate 7-phosphate (DAHP) to dehydroquinate (DHQ). This is 3-dehydroquinate synthase from Bacillus cytotoxicus (strain DSM 22905 / CIP 110041 / 391-98 / NVH 391-98).